The chain runs to 150 residues: D-aminoacyl-tRNA deacylase (150 aa).

Positions 138-139 (GP) match the Gly-cisPro motif, important for rejection of L-amino acids motif.

Belongs to the DTD family. In terms of assembly, homodimer.

It localises to the cytoplasm. The enzyme catalyses glycyl-tRNA(Ala) + H2O = tRNA(Ala) + glycine + H(+). It carries out the reaction a D-aminoacyl-tRNA + H2O = a tRNA + a D-alpha-amino acid + H(+). An aminoacyl-tRNA editing enzyme that deacylates mischarged D-aminoacyl-tRNAs. Also deacylates mischarged glycyl-tRNA(Ala), protecting cells against glycine mischarging by AlaRS. Acts via tRNA-based rather than protein-based catalysis; rejects L-amino acids rather than detecting D-amino acids in the active site. By recycling D-aminoacyl-tRNA to D-amino acids and free tRNA molecules, this enzyme counteracts the toxicity associated with the formation of D-aminoacyl-tRNA entities in vivo and helps enforce protein L-homochirality. This is D-aminoacyl-tRNA deacylase from Flavobacterium psychrophilum (strain ATCC 49511 / DSM 21280 / CIP 103535 / JIP02/86).